The following is a 539-amino-acid chain: Tripartite motif-containing protein 26 (539 aa).

The RING-type zinc-finger motif lies at 16 to 57; sequence CSICLDYLRDPVTIDCGHVFCRSCTTDVRPISGSRPVCPLCK. Residues 97 to 138 form a B box-type zinc finger; the sequence is QDAKLCERHREKLHYYCEDDGKLLCVMCRESREHRPHTAVLM. Residues Cys102, His105, Cys124, and His130 each contribute to the Zn(2+) site. Residues 188-227 are a coiled coil; sequence IVAEFEQGHQFLREREEHLLEQLAKLEQELTEGREKFKSR. Residues 295-539 form the B30.2/SPRY domain; sequence RGLREFQGKL…WPGTRLLLRP (245 aa). The disordered stretch occupies residues 376-437; that stretch reads REGWSEDEEE…EEEEEVLESC (62 aa). A compositionally biased stretch (acidic residues) spans 380–434; that stretch reads SEDEEEGDEEEEGEEEEEEEEAGYGDGYDDWETDEDEESLGDEEEEEEEEEEEVL.

This sequence belongs to the TRIM/RBCC family. As to quaternary structure, interacts with TBK1; this interaction bridges together TBK1 and NEMO in order to activate TBK1. Interacts with INCA1. In terms of processing, autoubiquitinates upon viral infection. In turn, autoubiquitinated TRIM26 recruits NEMO and bridges TBK1-NEMO interaction.

It localises to the cytoplasm. Its subcellular location is the nucleus. The enzyme catalyses S-ubiquitinyl-[E2 ubiquitin-conjugating enzyme]-L-cysteine + [acceptor protein]-L-lysine = [E2 ubiquitin-conjugating enzyme]-L-cysteine + N(6)-ubiquitinyl-[acceptor protein]-L-lysine.. In terms of biological role, E3 ubiquitin-protein ligase which regulates the IFN-beta production and antiviral response downstream of various DNA-encoded pattern-recognition receptors (PRRs). Also plays a central role in determining the response to different forms of oxidative stress by controlling levels of DNA glycosylases NEIL1, NEIL3 and NTH1 that are involved in repair of damaged DNA. Promotes nuclear IRF3 ubiquitination and proteasomal degradation. Bridges together TBK1 and NEMO during the innate response to viral infection leading to the activation of TBK1. Positively regulates LPS-mediated inflammatory innate immune response by catalyzing the 'Lys-11'-linked polyubiquitination of TAB1 to enhance its activation and subsequent NF-kappa-B and MAPK signaling. In a manner independent of its catalytic activity, inhibits WWP2, a SOX2-directed E3 ubiquitin ligase, and thus protects SOX2 from polyubiquitination and proteasomal degradation. Ubiquitinates the histone acetyltransferase protein complex component PHF20 and thereby triggers its degradation in the nucleus after its recruitment by the histone demethylase KDM6B, serving as a scaffold protein. Upon induction by TGF-beta, ubiquitinates the TFIID component TAF7 for proteasomal degradation. Induces ferroptosis by ubiquitinating SLC7A11, a critical protein for lipid reactive oxygen species (ROS) scavenging. Inhibits directly hepatitis B virus replication by mediating HBX ubiquitination and subsequent degradation. (Microbial infection) Promotes herpes simplex virus type 2/HHV-2 infection in vaginal epithelial cells by decreasing the nuclear localization of IRF3, the primary mediator of type I interferon activation. In Homo sapiens (Human), this protein is Tripartite motif-containing protein 26 (TRIM26).